Here is a 235-residue protein sequence, read N- to C-terminus: Glutathione S-transferase L3 (235 aa).

One can recognise a GST N-terminal domain in the interval 27 to 108; the sequence is GTTRLYTSYV…YLDNTFEGPS (82 aa). Residues 37-38, 65-66, 79-80, and 92-93 each bind glutathione; these read CP, NR, KV, and ES. In terms of domain architecture, GST C-terminal spans 86–230; it reads NGKIIGESLD…MDPKEIVEVF (145 aa).

This sequence belongs to the GST superfamily. Lambda family.

It localises to the cytoplasm. The protein resides in the cytosol. The catalysed reaction is RX + glutathione = an S-substituted glutathione + a halide anion + H(+). Functionally, catalyzes the glutathione-dependent reduction of S-glutathionylquercetin to quercetin. The chain is Glutathione S-transferase L3 (GSTL3) from Arabidopsis thaliana (Mouse-ear cress).